Here is a 356-residue protein sequence, read N- to C-terminus: Glutamine synthetase nodule isozyme (356 aa).

One can recognise a GS beta-grasp domain in the interval 19–99 (IIAEYIWVGG…VICDVYTPAG (81 aa)). The GS catalytic domain maps to 106–356 (KRHNAAKIFS…IAETTLLWKP (251 aa)).

It belongs to the glutamine synthetase family. In terms of assembly, homooctamer. Found at highest levels in root nodules.

Its subcellular location is the cytoplasm. The catalysed reaction is L-glutamate + NH4(+) + ATP = L-glutamine + ADP + phosphate + H(+). The chain is Glutamine synthetase nodule isozyme (GS1) from Medicago sativa (Alfalfa).